Here is a 225-residue protein sequence, read N- to C-terminus: MDKRISIAIDGPAAAGKSTVAKVVAKQLSYVYIDTGAMYRTLTYAALEQNIDIENEEKLMEVLQSIRIEFQQGKDTQQVFLNGQDVSEVIRTPDVTNRVSIVAKHRLVREEMVRRQQELAAQGGVVMDGRDIGTHVLPNAEVKIFMLASVEERAERRHLENMRKGFSSNLEQLKKEIAQRDKLDSEREVSPLKKAEDAFELDTTSLSIEEVVRNIMAIVSEALQK.

Residue 11-19 (GPAAAGKST) coordinates ATP.

The protein belongs to the cytidylate kinase family. Type 1 subfamily.

It localises to the cytoplasm. The enzyme catalyses CMP + ATP = CDP + ADP. It catalyses the reaction dCMP + ATP = dCDP + ADP. This chain is Cytidylate kinase, found in Bacillus cytotoxicus (strain DSM 22905 / CIP 110041 / 391-98 / NVH 391-98).